A 199-amino-acid polypeptide reads, in one-letter code: ATP-dependent Clp protease proteolytic subunit (199 aa).

Residue Ser-97 is the Nucleophile of the active site. Residue His-122 is part of the active site.

This sequence belongs to the peptidase S14 family. In terms of assembly, fourteen ClpP subunits assemble into 2 heptameric rings which stack back to back to give a disk-like structure with a central cavity, resembling the structure of eukaryotic proteasomes.

The protein resides in the cytoplasm. The catalysed reaction is Hydrolysis of proteins to small peptides in the presence of ATP and magnesium. alpha-casein is the usual test substrate. In the absence of ATP, only oligopeptides shorter than five residues are hydrolyzed (such as succinyl-Leu-Tyr-|-NHMec, and Leu-Tyr-Leu-|-Tyr-Trp, in which cleavage of the -Tyr-|-Leu- and -Tyr-|-Trp bonds also occurs).. Functionally, cleaves peptides in various proteins in a process that requires ATP hydrolysis. Has a chymotrypsin-like activity. Plays a major role in the degradation of misfolded proteins. The chain is ATP-dependent Clp protease proteolytic subunit from Pelobacter propionicus (strain DSM 2379 / NBRC 103807 / OttBd1).